The following is a 282-amino-acid chain: Bifunctional protein FolD (282 aa).

Residues 166–168 and Ile-232 contribute to the NADP(+) site; that span reads GAS.

The protein belongs to the tetrahydrofolate dehydrogenase/cyclohydrolase family. Homodimer.

It catalyses the reaction (6R)-5,10-methylene-5,6,7,8-tetrahydrofolate + NADP(+) = (6R)-5,10-methenyltetrahydrofolate + NADPH. The catalysed reaction is (6R)-5,10-methenyltetrahydrofolate + H2O = (6R)-10-formyltetrahydrofolate + H(+). The protein operates within one-carbon metabolism; tetrahydrofolate interconversion. Its function is as follows. Catalyzes the oxidation of 5,10-methylenetetrahydrofolate to 5,10-methenyltetrahydrofolate and then the hydrolysis of 5,10-methenyltetrahydrofolate to 10-formyltetrahydrofolate. This is Bifunctional protein FolD from Haemophilus influenzae (strain PittEE).